We begin with the raw amino-acid sequence, 704 residues long: ATP-dependent zinc metalloprotease FTSH 5, chloroplastic (704 aa).

The N-terminal 58 residues, 1 to 58 (MATTSSNPLLLSSNFLGSQIIISAPTPKTTTKSLPFSVISRKRYQISQSEKLMKSLPS), are a transit peptide targeting the chloroplast. Residues 59–76 (QAALAALLFSSSSPQALA) constitute a thylakoid transit peptide. The chain crosses the membrane as a helical span at residues 193 to 213 (FDFIGNLLFPLLAFGGLFYLF). 290–297 (GPPGTGKT) serves as a coordination point for ATP. His-512 lines the Zn(2+) pocket. The active site involves Glu-513. Residues His-516 and Asp-593 each contribute to the Zn(2+) site.

The protein in the N-terminal section; belongs to the AAA ATPase family. In the C-terminal section; belongs to the peptidase M41 family. As to quaternary structure, heterohexamers with FTSH1, FTSH2 and FTSH8. Zn(2+) serves as cofactor. Ubiquitous.

The protein resides in the plastid. It is found in the chloroplast thylakoid membrane. Functionally, part of a complex that function as an ATP-dependent zinc metallopeptidase. Involved in the thylakoid formation and in the removal of damaged D1 in the photosystem II, preventing cell death under high-intensity light conditions. Not involved in the degradation of the light-harvesting complex of photosystem II (LHC II) or in thermotolerance. The polypeptide is ATP-dependent zinc metalloprotease FTSH 5, chloroplastic (FTSH5) (Arabidopsis thaliana (Mouse-ear cress)).